A 169-amino-acid chain; its full sequence is Probable calcium-binding protein CML13 (169 aa).

The segment at 1–26 is disordered; it reads MSTVKGQTRRERPRGARPHGLTKQKR. The segment covering 15 to 24 has biased composition (basic residues); the sequence is GARPHGLTKQ. EF-hand domains lie at 24–59, 60–95, 97–132, and 133–168; these read QKRQ…LGFE, MTEE…KIGE, DSKE…LGEN, and FTYQ…TGYG. Residues D37, D39, S41, T43, E48, D73, D75, S77, S79, E84, D110, D112, N114, K116, D121, D146, N148, D150, E152, and E157 each coordinate Ca(2+).

Functionally, potential calcium sensor. The sequence is that of Probable calcium-binding protein CML13 (CML13) from Oryza sativa subsp. japonica (Rice).